A 385-amino-acid polypeptide reads, in one-letter code: Polyketide synthase 3 (385 aa).

Cysteine 157 is a catalytic residue.

The protein belongs to the thiolase-like superfamily. Chalcone/stilbene synthases family. As to expression, expressed in male and female flowers, and seedlings.

It is found in the cytoplasm. In terms of biological role, polyketide synthase responsible for the biosynthesis of secondary metabolites. This chain is Polyketide synthase 3 (PKSF3), found in Cannabis sativa (Hemp).